Consider the following 242-residue polypeptide: DNA repair protein RecO (242 aa).

The protein belongs to the RecO family.

Functionally, involved in DNA repair and RecF pathway recombination. The sequence is that of DNA repair protein RecO from Xanthobacter autotrophicus (strain ATCC BAA-1158 / Py2).